The chain runs to 315 residues: 10-epi-cubebol synthase (315 aa).

Aspartate 79, asparagine 220, serine 224, and glutamate 228 together coordinate Mg(2+). The DDXXD motif motif lies at 79 to 83 (DDVCE). The NXXXSXXXE motif motif lies at 220–228 (NDIYSLRKE).

Belongs to the terpene synthase family. It depends on Mg(2+) as a cofactor.

The enzyme catalyses (2E,6E)-farnesyl diphosphate + H2O = 10-epi-cubebol + diphosphate. Catalyzes the cyclization of farnesyl diphosphate (FPP) to 10-epi-cubebol. Is also responsible for the formation of many other sesquiterpenes, mainly cadalanes and cubebanes, including 1,10-di-epi-cubebol and the cadalanes delta-cadinene, T-cadinol and alpha-cadinol. This Sorangium cellulosum (strain So ce56) (Polyangium cellulosum (strain So ce56)) protein is 10-epi-cubebol synthase.